The chain runs to 283 residues: Putative 4-diphosphocytidyl-2-C-methyl-D-erythritol kinase (283 aa).

Residue Lys-10 is part of the active site. Position 94-104 (94-104) interacts with ATP; it reads PVCAGLGGGST. Residue Asp-136 is part of the active site.

It belongs to the GHMP kinase family. IspE subfamily.

The catalysed reaction is 4-CDP-2-C-methyl-D-erythritol + ATP = 4-CDP-2-C-methyl-D-erythritol 2-phosphate + ADP + H(+). Catalyzes the phosphorylation of the position 2 hydroxy group of 4-diphosphocytidyl-2C-methyl-D-erythritol. The chain is Putative 4-diphosphocytidyl-2-C-methyl-D-erythritol kinase (ispE) from Streptococcus agalactiae serotype Ia (strain ATCC 27591 / A909 / CDC SS700).